The chain runs to 478 residues: ATP synthase subunit beta (478 aa).

158 to 165 (GGAGVGKT) lines the ATP pocket.

This sequence belongs to the ATPase alpha/beta chains family. In terms of assembly, F-type ATPases have 2 components, CF(1) - the catalytic core - and CF(0) - the membrane proton channel. CF(1) has five subunits: alpha(3), beta(3), gamma(1), delta(1), epsilon(1). CF(0) has three main subunits: a(1), b(2) and c(9-12). The alpha and beta chains form an alternating ring which encloses part of the gamma chain. CF(1) is attached to CF(0) by a central stalk formed by the gamma and epsilon chains, while a peripheral stalk is formed by the delta and b chains.

It is found in the cell inner membrane. The enzyme catalyses ATP + H2O + 4 H(+)(in) = ADP + phosphate + 5 H(+)(out). Its function is as follows. Produces ATP from ADP in the presence of a proton gradient across the membrane. The catalytic sites are hosted primarily by the beta subunits. This Rhizobium johnstonii (strain DSM 114642 / LMG 32736 / 3841) (Rhizobium leguminosarum bv. viciae) protein is ATP synthase subunit beta.